The primary structure comprises 225 residues: Methylthioribulose-1-phosphate dehydratase (225 aa).

Positions 106 and 108 each coordinate Zn(2+).

This sequence belongs to the aldolase class II family. MtnB subfamily. The cofactor is Zn(2+).

The enzyme catalyses 5-(methylsulfanyl)-D-ribulose 1-phosphate = 5-methylsulfanyl-2,3-dioxopentyl phosphate + H2O. It participates in amino-acid biosynthesis; L-methionine biosynthesis via salvage pathway; L-methionine from S-methyl-5-thio-alpha-D-ribose 1-phosphate: step 2/6. Catalyzes the dehydration of methylthioribulose-1-phosphate (MTRu-1-P) into 2,3-diketo-5-methylthiopentyl-1-phosphate (DK-MTP-1-P). The polypeptide is Methylthioribulose-1-phosphate dehydratase (Xanthomonas oryzae pv. oryzae (strain PXO99A)).